Reading from the N-terminus, the 421-residue chain is MTTNIIDELSWRGLINQSTDLDALREATQEPITLYCGFDPTGPSLHAGHLVPLLMLRRFQQAGHNPIVLAGGATGMIGDPRDVGERTMNSADTVAEWAERISDQLSRFVDFEGEHAARLVNNAEWTNNMSVVTFLRDVGKHFPLNTMLARDTVKRRLETDGISYTEFSYMLLQANDFVELNRRFNCILQVGGGDQWGNIVSGVDLNRRVQGKSVHGITVPLVTDSEGKKFGKSTGGGSLWLDPEMTSPYSWYQYFINAADADVIRYLRWFTFLTKEELDELEVEVAERPFKREAQRRLAREMTNLVHGEEATAAVELAAQALFGRAELRDLDEKTLEASVSETEVAEIQPGEPRTIVDLLIASGLVDSRGAARRTISEGGAYVNNERITADDWEPSESDLLHGQWLVLRKGKKNFAGVKIK.

Tyrosine 35 contacts L-tyrosine. A 'HIGH' region motif is present at residues 40 to 49 (PTGPSLHAGH). Residues tyrosine 169 and glutamine 173 each contribute to the L-tyrosine site. Positions 229–233 (KFGKS) match the 'KMSKS' region motif. ATP is bound at residue lysine 232. An S4 RNA-binding domain is found at 354–420 (RTIVDLLIAS…GKKNFAGVKI (67 aa)).

The protein belongs to the class-I aminoacyl-tRNA synthetase family. TyrS type 1 subfamily. In terms of assembly, homodimer.

It localises to the cytoplasm. The catalysed reaction is tRNA(Tyr) + L-tyrosine + ATP = L-tyrosyl-tRNA(Tyr) + AMP + diphosphate + H(+). Its function is as follows. Catalyzes the attachment of tyrosine to tRNA(Tyr) in a two-step reaction: tyrosine is first activated by ATP to form Tyr-AMP and then transferred to the acceptor end of tRNA(Tyr). The polypeptide is Tyrosine--tRNA ligase (Corynebacterium efficiens (strain DSM 44549 / YS-314 / AJ 12310 / JCM 11189 / NBRC 100395)).